A 371-amino-acid chain; its full sequence is Enoyl-[acyl-carrier-protein] reductase [NADH] 2, chloroplastic (371 aa).

Residues 1–67 (MGASVTTGLQ…SLNHKRFAVR (67 aa)) constitute a chloroplast transit peptide. NAD(+) is bound by residues glycine 87, tyrosine 94, 151 to 152 (DA), 198 to 199 (SL), and leucine 248. Residues tyrosine 250 and tyrosine 260 each act as proton acceptor in the active site. NAD(+)-binding positions include lysine 268 and 298–302 (LGSRA).

It belongs to the short-chain dehydrogenases/reductases (SDR) family. FabI subfamily. In terms of assembly, homotetramer.

Its subcellular location is the plastid. The protein resides in the chloroplast. It catalyses the reaction a 2,3-saturated acyl-[ACP] + NAD(+) = a (2E)-enoyl-[ACP] + NADH + H(+). It participates in lipid metabolism; fatty acid biosynthesis. In terms of biological role, catalyzes the NAD-dependent reduction of a carbon-carbon double bond in an enoyl moiety that is covalently linked to an acyl carrier protein (ACP). Catalyzes the last reduction step in the de novo synthesis cycle of fatty acids. Involved in the elongation cycle of fatty acids which are used in lipid metabolism. Required for normal plant growth. The protein is Enoyl-[acyl-carrier-protein] reductase [NADH] 2, chloroplastic of Oryza sativa subsp. japonica (Rice).